The sequence spans 111 residues: U-scoloptoxin(16)-Sm2a (111 aa).

Positions 1–28 are cleaved as a signal peptide; that stretch reads MCAKPNHLFVTVTFIFGFAVCIVQISAW.

The protein belongs to the scoloptoxin-16 family. In terms of processing, contains 4 disulfide bonds. Expressed by the venom gland.

The protein resides in the secreted. The chain is U-scoloptoxin(16)-Sm2a from Scolopendra morsitans (Tanzanian blue ringleg centipede).